A 151-amino-acid polypeptide reads, in one-letter code: Small ribosomal subunit protein uS15 (151 aa).

Belongs to the universal ribosomal protein uS15 family.

In Choristoneura parallela (Spotted fireworm moth), this protein is Small ribosomal subunit protein uS15 (RpS13).